Consider the following 156-residue polypeptide: Transcriptional repressor NrdR (156 aa).

Residues 3 to 34 (CPKCNSTQSKVVDSRHADELNAIRRRRECENC) fold into a zinc finger. One can recognise an ATP-cone domain in the interval 49–139 (LIVVKKDGTR…VYKEFKDVDQ (91 aa)).

It belongs to the NrdR family. The cofactor is Zn(2+).

Its function is as follows. Negatively regulates transcription of bacterial ribonucleotide reductase nrd genes and operons by binding to NrdR-boxes. In Staphylococcus aureus (strain NCTC 8325 / PS 47), this protein is Transcriptional repressor NrdR.